A 627-amino-acid chain; its full sequence is UvrABC system protein C (627 aa).

The GIY-YIG domain maps to 26–105; that stretch reads PSPGVYQFRN…IKELKPRYNV (80 aa). The UVR domain occupies 219–254; it reads STMIRSLTSAMQLFARELKFERAAEIKMQLESLKRY.

Belongs to the UvrC family. As to quaternary structure, interacts with UvrB in an incision complex.

Its subcellular location is the cytoplasm. Its function is as follows. The UvrABC repair system catalyzes the recognition and processing of DNA lesions. UvrC both incises the 5' and 3' sides of the lesion. The N-terminal half is responsible for the 3' incision and the C-terminal half is responsible for the 5' incision. The chain is UvrABC system protein C from Pelodictyon phaeoclathratiforme (strain DSM 5477 / BU-1).